The sequence spans 282 residues: 4-diphosphocytidyl-2-C-methyl-D-erythritol kinase (282 aa).

Lys-9 is an active-site residue. 98-108 contacts ATP; the sequence is PMGGGLGGGSS. Residue Asp-140 is part of the active site.

It belongs to the GHMP kinase family. IspE subfamily. As to quaternary structure, homodimer.

It carries out the reaction 4-CDP-2-C-methyl-D-erythritol + ATP = 4-CDP-2-C-methyl-D-erythritol 2-phosphate + ADP + H(+). The protein operates within isoprenoid biosynthesis; isopentenyl diphosphate biosynthesis via DXP pathway; isopentenyl diphosphate from 1-deoxy-D-xylulose 5-phosphate: step 3/6. Its function is as follows. Catalyzes the phosphorylation of the position 2 hydroxy group of 4-diphosphocytidyl-2C-methyl-D-erythritol. This Salmonella heidelberg (strain SL476) protein is 4-diphosphocytidyl-2-C-methyl-D-erythritol kinase.